A 485-amino-acid polypeptide reads, in one-letter code: Hemolysin (485 aa).

A signal peptide spans 1 to 28 (MKNFKGRKFLTCVLVSLCTLNYSSISFA). Beta stranded transmembrane passes span 196–209 (KAQIASALNVNAKY), 216–225 (IDFNAVANGE), 294–303 (SKDVQAAFKA), and 311–323 (ETSGQYKDIFEES). Positions 465–475 (ECTGLAWEWWR) match the Conserved undecapeptide motif.

This sequence belongs to the cholesterol-dependent cytolysin family. In terms of assembly, homooligomeric pore complex of 35 to 50 subunits; when inserted in the host membrane.

It is found in the secreted. It localises to the host cell membrane. Functionally, a cholesterol-dependent toxin with hemolytic activity against host red blood cells. Causes cytolysis by forming pores in cholesterol containing host membranes. binding to target membranes, the protein undergoes a major conformation change, leading to its insertion in the host membrane and formation of an oligomeric pore complex. Cholesterol is required for binding to host membranes, membrane insertion and pore formation; cholesterol binding is mediated by a Thr-Leu pair in the C-terminus. Can be reversibly inactivated by oxidation. The sequence is that of Hemolysin from Bacillus cereus.